The following is a 517-amino-acid chain: Glutamate--tRNA ligase (517 aa).

The 'HIGH' region motif lies at 14–24 (PSPTGPLHIGG). Residues 266–270 (KLSKR) carry the 'KMSKS' region motif. An ATP-binding site is contributed by Lys269.

The protein belongs to the class-I aminoacyl-tRNA synthetase family. Glutamate--tRNA ligase type 1 subfamily. Monomer.

Its subcellular location is the cytoplasm. It catalyses the reaction tRNA(Glu) + L-glutamate + ATP = L-glutamyl-tRNA(Glu) + AMP + diphosphate. Functionally, catalyzes the attachment of glutamate to tRNA(Glu) in a two-step reaction: glutamate is first activated by ATP to form Glu-AMP and then transferred to the acceptor end of tRNA(Glu). This is Glutamate--tRNA ligase from Cytophaga hutchinsonii (strain ATCC 33406 / DSM 1761 / CIP 103989 / NBRC 15051 / NCIMB 9469 / D465).